A 369-amino-acid polypeptide reads, in one-letter code: Allantoicase (369 aa).

Positions 341–369 are disordered; it reads PDSKNNNNNNNNNNNNNTSNSFKTSDRQQ. Positions 345-357 are enriched in low complexity; it reads NNNNNNNNNNNNN.

It belongs to the allantoicase family.

The catalysed reaction is allantoate + H2O = (S)-ureidoglycolate + urea. Its pathway is nitrogen metabolism; (S)-allantoin degradation; (S)-ureidoglycolate from allantoate (aminidohydrolase route): step 1/1. Functionally, utilization of purines as secondary nitrogen sources, when primary sources are limiting. The chain is Allantoicase (allC) from Dictyostelium discoideum (Social amoeba).